The sequence spans 1045 residues: Endoglucanase B (1045 aa).

A signal peptide spans 1–33; sequence MLRQVPRTLVAGGSALAVAVGVLVAPLATGAAA. The interval 34–492 is catalytic; the sequence is APTYNYAEAL…LASFPTPEQP (459 aa). Residue Asp-91 is the Nucleophile of the active site. Residues His-410, Asp-449, and Glu-458 contribute to the active site. The region spanning 493–642 is the CBM3 domain; the sequence is DGDQLFVEAM…STLVWGKEPT (150 aa). Linker ('hinge') (Pro-Thr box) regions lie at residues 644–650, 734–748, 831–846, and 931–944; these read TTTDTTP, AAVT…ETEP, APVT…DTVA, and SPVT…TSTP. 3 Fibronectin type-III domains span residues 653–743, 751–840, and 849–940; these read TPGT…TDTT, TPGT…TAAP, and VPGT…TLPV. A CBM2 domain is found at 939–1045; the sequence is PVTSTPSCTV…SFTVNGEVCG (107 aa). Cys-946 and Cys-1044 form a disulfide bridge.

It belongs to the glycosyl hydrolase 9 (cellulase E) family.

The catalysed reaction is Endohydrolysis of (1-&gt;4)-beta-D-glucosidic linkages in cellulose, lichenin and cereal beta-D-glucans.. Its function is as follows. The biological conversion of cellulose to glucose generally requires three types of hydrolytic enzymes: (1) Endoglucanases which cut internal beta-1,4-glucosidic bonds; (2) Exocellobiohydrolases that cut the disaccharide cellobiose from the non-reducing end of the cellulose polymer chain; (3) Beta-1,4-glucosidases which hydrolyze the cellobiose and other short cello-oligosaccharides to glucose. The sequence is that of Endoglucanase B (cenB) from Cellulomonas fimi.